We begin with the raw amino-acid sequence, 280 residues long: Energy-coupling factor transporter ATP-binding protein EcfA2 (280 aa).

Positions 3 to 245 constitute an ABC transporter domain; that stretch reads INLQNVSYTY…VSLLEKKQLG (243 aa). 40 to 47 provides a ligand contact to ATP; it reads GHTGSGKS.

Belongs to the ABC transporter superfamily. Energy-coupling factor EcfA family. In terms of assembly, forms a stable energy-coupling factor (ECF) transporter complex composed of 2 membrane-embedded substrate-binding proteins (S component), 2 ATP-binding proteins (A component) and 2 transmembrane proteins (T component).

The protein resides in the cell membrane. Functionally, ATP-binding (A) component of a common energy-coupling factor (ECF) ABC-transporter complex. Unlike classic ABC transporters this ECF transporter provides the energy necessary to transport a number of different substrates. In Streptococcus pyogenes serotype M1, this protein is Energy-coupling factor transporter ATP-binding protein EcfA2.